Consider the following 62-residue polypeptide: Large ribosomal subunit protein eL37 (62 aa).

Residues Cys20, Cys23, Cys35, and Cys38 each contribute to the Zn(2+) site. The segment at 20 to 38 (CRRCGRRAYHVRKGYCAAC) adopts a C4-type zinc-finger fold.

This sequence belongs to the eukaryotic ribosomal protein eL37 family. Zn(2+) serves as cofactor.

In terms of biological role, binds to the 23S rRNA. This chain is Large ribosomal subunit protein eL37, found in Methanopyrus kandleri (strain AV19 / DSM 6324 / JCM 9639 / NBRC 100938).